A 212-amino-acid chain; its full sequence is Large ribosomal subunit protein uL3 (212 aa).

Glutamine 153 is modified (N5-methylglutamine).

Belongs to the universal ribosomal protein uL3 family. In terms of assembly, part of the 50S ribosomal subunit. Forms a cluster with proteins L14 and L19. Methylated by PrmB.

One of the primary rRNA binding proteins, it binds directly near the 3'-end of the 23S rRNA, where it nucleates assembly of the 50S subunit. This chain is Large ribosomal subunit protein uL3, found in Shewanella denitrificans (strain OS217 / ATCC BAA-1090 / DSM 15013).